Here is a 370-residue protein sequence, read N- to C-terminus: Germination protease (370 aa).

A propeptide spanning residues 1–15 is cleaved from the precursor; that stretch reads MEKELDLSQYSVRTD.

This sequence belongs to the peptidase A25 family. In terms of assembly, homotetramer. In terms of processing, autoproteolytically processed. The inactive tetrameric zymogen termed p46 autoprocesses to a smaller form termed p41, which is active only during spore germination.

The enzyme catalyses Endopeptidase action with P4 Glu or Asp, P1 preferably Glu &gt; Asp, P1' hydrophobic and P2' Ala.. In terms of biological role, initiates the rapid degradation of small, acid-soluble proteins during spore germination. This Priestia megaterium (strain ATCC 12872 / QMB1551) (Bacillus megaterium) protein is Germination protease (gpr).